Reading from the N-terminus, the 686-residue chain is MAM domain-containing protein 2 (686 aa).

Positions M1–A18 are cleaved as a signal peptide. 4 consecutive MAM domains span residues G24 to E169, I168 to N329, A340 to S498, and G507 to E666. 2 N-linked (GlcNAc...) asparagine glycosylation sites follow: N134 and N329. Disordered stretches follow at residues E521 to K543 and G665 to Y686. The N-linked (GlcNAc...) asparagine glycan is linked to N524.

Post-translationally, O-glycosylated.

It localises to the secreted. It is found in the extracellular space. The protein localises to the extracellular matrix. The polypeptide is MAM domain-containing protein 2 (MAMDC2) (Homo sapiens (Human)).